Reading from the N-terminus, the 365-residue chain is Holliday junction branch migration complex subunit RuvB (365 aa).

A large ATPase domain (RuvB-L) region spans residues 1 to 191 (MSPELGGGYD…FGFTAHMDFY (191 aa)). ATP is bound by residues Leu-30, Arg-31, Gly-72, Lys-75, Thr-76, Ser-77, 138-140 (EDF), Arg-181, Tyr-191, and Arg-228. Thr-76 lines the Mg(2+) pocket. The interval 192–262 (EPAELKQILM…IAHAALAVYD (71 aa)) is small ATPAse domain (RuvB-S). A head domain (RuvB-H) region spans residues 265-365 (QLGLDRLDRS…QASLFDPEDP (101 aa)). DNA contacts are provided by Arg-320 and Arg-325.

This sequence belongs to the RuvB family. Homohexamer. Forms an RuvA(8)-RuvB(12)-Holliday junction (HJ) complex. HJ DNA is sandwiched between 2 RuvA tetramers; dsDNA enters through RuvA and exits via RuvB. An RuvB hexamer assembles on each DNA strand where it exits the tetramer. Each RuvB hexamer is contacted by two RuvA subunits (via domain III) on 2 adjacent RuvB subunits; this complex drives branch migration. In the full resolvosome a probable DNA-RuvA(4)-RuvB(12)-RuvC(2) complex forms which resolves the HJ.

It localises to the cytoplasm. It catalyses the reaction ATP + H2O = ADP + phosphate + H(+). The RuvA-RuvB-RuvC complex processes Holliday junction (HJ) DNA during genetic recombination and DNA repair, while the RuvA-RuvB complex plays an important role in the rescue of blocked DNA replication forks via replication fork reversal (RFR). RuvA specifically binds to HJ cruciform DNA, conferring on it an open structure. The RuvB hexamer acts as an ATP-dependent pump, pulling dsDNA into and through the RuvAB complex. RuvB forms 2 homohexamers on either side of HJ DNA bound by 1 or 2 RuvA tetramers; 4 subunits per hexamer contact DNA at a time. Coordinated motions by a converter formed by DNA-disengaged RuvB subunits stimulates ATP hydrolysis and nucleotide exchange. Immobilization of the converter enables RuvB to convert the ATP-contained energy into a lever motion, pulling 2 nucleotides of DNA out of the RuvA tetramer per ATP hydrolyzed, thus driving DNA branch migration. The RuvB motors rotate together with the DNA substrate, which together with the progressing nucleotide cycle form the mechanistic basis for DNA recombination by continuous HJ branch migration. Branch migration allows RuvC to scan DNA until it finds its consensus sequence, where it cleaves and resolves cruciform DNA. The protein is Holliday junction branch migration complex subunit RuvB of Rhodococcus opacus (strain B4).